A 265-amino-acid polypeptide reads, in one-letter code: Polyphosphate glucokinase (265 aa).

The segment covering 1–18 has biased composition (polar residues); the sequence is MTSTGPETSETPGATTQR. The tract at residues 1–22 is disordered; it reads MTSTGPETSETPGATTQRHGFG. 24-29 provides a ligand contact to ATP; sequence DVGGSG.

Belongs to the ROK (NagC/XylR) family. As to quaternary structure, homodimer.

It catalyses the reaction [phosphate](n) + D-glucose = [phosphate](n-1) + D-glucose 6-phosphate + H(+). The enzyme catalyses D-glucose + ATP = D-glucose 6-phosphate + ADP + H(+). Catalyzes the phosphorylation of glucose using polyphosphate or ATP as the phosphoryl donor. Polyphosphate, rather than ATP, seems to be the major phosphate donor for the enzyme in M.tuberculosis. The protein is Polyphosphate glucokinase (ppgK) of Mycobacterium tuberculosis (strain CDC 1551 / Oshkosh).